The following is a 118-amino-acid chain: Large ribosomal subunit protein bL19 (118 aa).

This sequence belongs to the bacterial ribosomal protein bL19 family.

In terms of biological role, this protein is located at the 30S-50S ribosomal subunit interface and may play a role in the structure and function of the aminoacyl-tRNA binding site. This chain is Large ribosomal subunit protein bL19, found in Campylobacter jejuni subsp. jejuni serotype O:2 (strain ATCC 700819 / NCTC 11168).